The primary structure comprises 415 residues: SVF1-like protein YDR222W (415 aa).

Belongs to the SVF1 family.

The protein localises to the cytoplasm. The protein is SVF1-like protein YDR222W of Saccharomyces cerevisiae (strain ATCC 204508 / S288c) (Baker's yeast).